The sequence spans 344 residues: N-acetyl-gamma-glutamyl-phosphate reductase (344 aa).

Cys149 is a catalytic residue.

The protein belongs to the NAGSA dehydrogenase family. Type 1 subfamily.

Its subcellular location is the cytoplasm. The catalysed reaction is N-acetyl-L-glutamate 5-semialdehyde + phosphate + NADP(+) = N-acetyl-L-glutamyl 5-phosphate + NADPH + H(+). The protein operates within amino-acid biosynthesis; L-arginine biosynthesis; N(2)-acetyl-L-ornithine from L-glutamate: step 3/4. Functionally, catalyzes the NADPH-dependent reduction of N-acetyl-5-glutamyl phosphate to yield N-acetyl-L-glutamate 5-semialdehyde. In Syntrophobacter fumaroxidans (strain DSM 10017 / MPOB), this protein is N-acetyl-gamma-glutamyl-phosphate reductase.